We begin with the raw amino-acid sequence, 114 residues long: U17-barytoxin-Tl1d (114 aa).

The N-terminal stretch at 1 to 20 (MKTIIVFLSLLVLATKFGDA) is a signal peptide. The propeptide occupies 21–74 (NEGVNQEQMKEVIQNEFREDFLNEMAAMSLLQQLEAIESTLLEKEADRNSRQKR). 3 disulfide bridges follow: C75–C88, C82–C93, and C87–C108.

It belongs to the neurotoxin 14 (magi-1) family. 03 (ICK-30-40) subfamily. As to expression, expressed by the venom gland.

Its subcellular location is the secreted. Ion channel inhibitor. The sequence is that of U17-barytoxin-Tl1d from Trittame loki (Brush-footed trapdoor spider).